We begin with the raw amino-acid sequence, 293 residues long: Glycerophosphodiester phosphodiesterase (293 aa).

A signal peptide spans 1 to 26 (MRKNRILALFVLSLGLLSFMVTPVSA). A GP-PDE domain is found at 38–290 (ILTVAHRGAS…NYPDLFHKVK (253 aa)). Histidine 43 serves as the catalytic Proton acceptor. Residues histidine 43, arginine 44, and glutamate 70 each contribute to the sn-glycerol 3-phosphate site. Residues glutamate 70 and aspartate 72 each coordinate Ca(2+). The sn-glycerol 3-phosphate site is built by histidine 85, glutamate 152, and glutamine 188. Residue histidine 85 is the Proton donor of the active site. Glutamate 152 provides a ligand contact to Ca(2+).

Belongs to the glycerophosphoryl diester phosphodiesterase family. It depends on Ca(2+) as a cofactor.

The protein localises to the secreted. The catalysed reaction is a sn-glycero-3-phosphodiester + H2O = an alcohol + sn-glycerol 3-phosphate + H(+). Its function is as follows. Glycerophosphodiester phosphodiesterase hydrolyzes glycerophosphodiesters into glycerol-3-phosphate (G3P) and the corresponding alcohol. Involved in wall teichoic acid (WTA) metabolism during phosphate starvation. Catalyzes the degradation of WTA, enabling the utilization of WTA as a phosphate reserve under limiting conditions. Is highly selective for the poly(gylcerol phosphate) WTA backbone and catalyzes exolytic cleavage of individual monomer units. In vitro is active toward the WTA oligomer mimics glycerophosphoglycerol (GPG) and bis-glycerophosphoglycerol (bGPG). The protein is Glycerophosphodiester phosphodiesterase of Bacillus subtilis (strain 168).